Consider the following 312-residue polypeptide: tRNA pseudouridine synthase B (312 aa).

Asp-47 functions as the Nucleophile in the catalytic mechanism.

This sequence belongs to the pseudouridine synthase TruB family. Type 1 subfamily.

It carries out the reaction uridine(55) in tRNA = pseudouridine(55) in tRNA. Its function is as follows. Responsible for synthesis of pseudouridine from uracil-55 in the psi GC loop of transfer RNAs. This is tRNA pseudouridine synthase B from Vibrio cholerae serotype O1 (strain M66-2).